A 701-amino-acid polypeptide reads, in one-letter code: MGLPEERRKSGSGSRAREETGAEGRVRGWSPPPEVRRSAHVPSLQRYRELHRRSVEEPREFWGNIAKEFYWKTACPGPFLQYNFDVTKGKIFTEWMKGATTNICYNVLDRNVHEKKLGDKVAFYWEGNEPGETTKITYRELLVQVCQFSNVLRKQGIQKGDRVAIYMPMILELVVAMLACARLGALHSIVFAGFSAESLCERILDSSCCLLITTDAFYRGEKLVNLKELADESLEKCREKGFPVRCCIVVKHLGRAELGMNDSPSQSPPVKRPCPDVQICWNEGVDLWWHELMQQAGDECEPEWCDAEDPLFILYTSGSTGKPKGVVHTIGGYMLYVATTFKYVFDFHPEDVFWCTADIGWITGHSYVTYGPLANGATSVLFEGIPTYPDEGRLWSIVDKYKVTKFYTAPTAIRMLMKFGDDPVTKHSRASLQVLGTVGEPINPEAWLWYHRVVGSQRCPIVDTFWQTETGGHMLTPLPGATPMKPGSASFPFFGVAPAILNESGEELEGEAEGYLVFKQPWPGIMRTVYGNHTRFETTYFKKFPGYYVTGDGCRRDQDGYYWITGRIDDMLNVSGHLLSTAEVESALVEHEAVAEAAVVGHPHPVKGECLYCFVTLCDGHTFSPTLTEELKKQIREKIGPIATPDYIQNAPGLPKTRSGKIMRRVLRKIAQNDHDLGDTSTVADPSVINHLFSHRCLTTQ.

Basic and acidic residues predominate over residues 1–26; it reads MGLPEERRKSGSGSRAREETGAEGRV. The interval 1 to 37 is disordered; it reads MGLPEERRKSGSGSRAREETGAEGRVRGWSPPPEVRR. Positions 1–107 are interaction with TFEB; sequence MGLPEERRKS…GATTNICYNV (107 aa). Serine 30 is subject to Phosphoserine. Residue 219-222 coordinates CoA; that stretch reads RGEK. Phosphoserine is present on residues serine 263, serine 265, and serine 267. Threonine 363 contributes to the CoA binding site. An N6-acetyllysine modification is found at lysine 418. ATP-binding positions include 439–441, 463–468, aspartate 552, and arginine 567; these read GEP and DTFWQT. Positions 575 and 636 each coordinate CoA. The short motif at 656–668 is the Nuclear localization signal element; it reads KTRSGKIMRRVLR. Position 659 is a phosphoserine; by AMPK (serine 659). N6-acetyllysine is present on lysine 661.

This sequence belongs to the ATP-dependent AMP-binding enzyme family. As to quaternary structure, monomer. Interacts with TFEB. AMPK-mediated phosphorylated form at Ser-659 interacts with KPNA1; this interaction results in nuclear translocation of ACSS2. Interacts with the 'Thr-172' phosphorylated form of PRKAA2. Interacts with CREBBP. Reversibly acetylated at Lys-661. The acetyl-CoA synthase activity is inhibited by acetylation and activated by deacetylation mediated by the deacetylases SIRT1 and SIRT3. As to expression, expressed in the hippocampus.

It is found in the cytoplasm. Its subcellular location is the cytosol. It localises to the nucleus. The catalysed reaction is acetate + ATP + CoA = acetyl-CoA + AMP + diphosphate. The enzyme catalyses propanoate + ATP + CoA = propanoyl-CoA + AMP + diphosphate. Inhibited by acetylation at Lys-661 and activated by deacetylation mediated by the deacetylases SIRT1 and SIRT3. Functionally, catalyzes the synthesis of acetyl-CoA from short-chain fatty acids. Acetate is the preferred substrate but can also utilize propionate with a much lower affinity. Nuclear ACSS2 promotes glucose deprivation-induced lysosomal biogenesis and autophagy, tumor cell survival and brain tumorigenesis. Glucose deprivation results in AMPK-mediated phosphorylation of ACSS2 leading to its translocation to the nucleus where it binds to TFEB and locally produces acetyl-CoA for histone acetylation in the promoter regions of TFEB target genes thereby activating their transcription. The regulation of genes associated with autophagy and lysosomal activity through ACSS2 is important for brain tumorigenesis and tumor survival. Acts as a chromatin-bound transcriptional coactivator that up-regulates histone acetylation and expression of neuronal genes. Can be recruited to the loci of memory-related neuronal genes to maintain a local acetyl-CoA pool, providing the substrate for histone acetylation and promoting the expression of specific genes, which is essential for maintaining long-term spatial memory. This Mus musculus (Mouse) protein is Acetyl-coenzyme A synthetase, cytoplasmic (Acss2).